The sequence spans 288 residues: Mortality factor 4-like protein 2 (288 aa).

Positions 1 to 15 (MSSRKQGSQPRGQQS) are enriched in polar residues. Residues 1–113 (MSSRKQGSQP…RADPTVESEE (113 aa)) form a disordered region. Residue serine 71 is modified to Phosphoserine. One can recognise an MRG domain in the interval 117–288 (NRMEVKVKIP…ASAEYHRKAL (172 aa)).

In terms of assembly, component of the NuA4 histone acetyltransferase complex which contains the catalytic subunit KAT5/TIP60 and the subunits EP400, TRRAP/PAF400, BRD8/SMAP, EPC1, DMAP1/DNMAP1, RUVBL1/TIP49, RUVBL2, ING3, actin, ACTL6A/BAF53A, MORF4L1/MRG15, MORF4L2/MRGX, MRGBP, YEATS4/GAS41 and VPS72/YL1. The NuA4 complex interacts with MYC and the adenovirus E1A protein. MORF4L1 may also participate in the formation of NuA4 related complexes which lack the KAT5/TIP60 catalytic subunit, but which include the SWI/SNF related protein SRCAP. Component of the MSIN3A histone deacetylase complex, which includes SIN3A, HDAC2, ARID4B, MORF4L1, RBBP4/RbAp48, and RBBP7/RbAp46. Interacts with MRFAP1 and RB1. May also interact with one or more as yet undefined members of the TLE (transducin-like enhancer of split) family of transcriptional repressors.

It localises to the nucleus. Its function is as follows. Component of the NuA4 histone acetyltransferase complex which is involved in transcriptional activation of select genes principally by acetylation of nucleosomal histone H4 and H2A. This modification may both alter nucleosome - DNA interactions and promote interaction of the modified histones with other proteins which positively regulate transcription. This complex may be required for the activation of transcriptional programs associated with oncogene and proto-oncogene mediated growth induction, tumor suppressor mediated growth arrest and replicative senescence, apoptosis, and DNA repair. The NuA4 complex ATPase and helicase activities seem to be, at least in part, contributed by the association of RUVBL1 and RUVBL2 with EP400. NuA4 may also play a direct role in DNA repair when directly recruited to sites of DNA damage. Also a component of the MSIN3A complex which acts to repress transcription by deacetylation of nucleosomal histones. The sequence is that of Mortality factor 4-like protein 2 (MORF4L2) from Homo sapiens (Human).